The sequence spans 475 residues: Membrane-bound lytic murein transglycosylase F (475 aa).

Residues 1-15 form the signal peptide; the sequence is MKKLLLILCCITLLA. Residues 16-258 form a non-LT domain region; it reads ACQKVVVEQE…HLNEKYFAHV (243 aa). The segment at 259–475 is LT domain; sequence KRFDYVDTRA…KTEAAQPQQP (217 aa). Residue Glu303 is part of the active site.

In the N-terminal section; belongs to the bacterial solute-binding protein 3 family. The protein in the C-terminal section; belongs to the transglycosylase Slt family.

Its subcellular location is the cell outer membrane. The enzyme catalyses Exolytic cleavage of the (1-&gt;4)-beta-glycosidic linkage between N-acetylmuramic acid (MurNAc) and N-acetylglucosamine (GlcNAc) residues in peptidoglycan, from either the reducing or the non-reducing ends of the peptidoglycan chains, with concomitant formation of a 1,6-anhydrobond in the MurNAc residue.. Its function is as follows. Murein-degrading enzyme that degrades murein glycan strands and insoluble, high-molecular weight murein sacculi, with the concomitant formation of a 1,6-anhydromuramoyl product. Lytic transglycosylases (LTs) play an integral role in the metabolism of the peptidoglycan (PG) sacculus. Their lytic action creates space within the PG sacculus to allow for its expansion as well as for the insertion of various structures such as secretion systems and flagella. This is Membrane-bound lytic murein transglycosylase F from Shewanella halifaxensis (strain HAW-EB4).